We begin with the raw amino-acid sequence, 440 residues long: 2-alpha-hydroxytaxane 2-O-benzoyltransferase (440 aa).

Residues His158 and Asp367 each act as proton acceptor in the active site.

The protein belongs to the plant acyltransferase family.

The enzyme catalyses 10-deacetyl-2-debenzoylbaccatin III + benzoyl-CoA = 10-deacetylbaccatin III + CoA. The protein operates within alkaloid biosynthesis; taxol biosynthesis; baccatin III from 10-deacetyl-2-debenzoylbaccatin III: step 1/2. Its function is as follows. Catalyzes the conversion of 2-debenzoyl-7,13-diacetylbaccatin III, a semisynthetic substrate, to 7,13-diacetylbaccatin III. This chain is 2-alpha-hydroxytaxane 2-O-benzoyltransferase, found in Taxus cuspidata (Japanese yew).